The following is a 249-amino-acid chain: Tetraspanin-7 (249 aa).

At 1–16 (MASRRMETKPVITCLK) the chain is on the cytoplasmic side. The helical transmembrane segment at 17-40 (TLLIIYSFVFWITGVILLAVGVWG) threads the bilayer. The Extracellular segment spans residues 41–56 (KLTLGTYISLIAENST). Asn-54 is a glycosylation site (N-linked (GlcNAc...) asparagine). A helical membrane pass occupies residues 57-75 (NAPYVLIGTGTTIVVFGLF). Residues 76–86 (GCFATCRGSPW) lie on the Cytoplasmic side of the membrane. A helical transmembrane segment spans residues 87–112 (MLKLYAMFLSLVFLAELVAGISGFVF). Residues 113 to 213 (RHEIKDTFLR…LVTSFMETNM (101 aa)) are Extracellular-facing. 4 N-linked (GlcNAc...) asparagine glycosylation sites follow: Asn-155, Asn-158, Asn-177, and Asn-188. The chain crosses the membrane as a helical span at residues 214–234 (GIIAGVAFGIAFSQLIGMLLA). Residues 235-249 (CCLSRFITANQYEMV) lie on the Cytoplasmic side of the membrane.

This sequence belongs to the tetraspanin (TM4SF) family. As to quaternary structure, (Microbial infection) Interacts with herpes simplex virus 1 (HHV-1) UL35. Not solely expressed in T-cells. Expressed in acute myelocytic leukemia cells of some patients.

The protein resides in the membrane. In terms of biological role, may be involved in cell proliferation and cell motility. This chain is Tetraspanin-7 (TSPAN7), found in Homo sapiens (Human).